A 192-amino-acid chain; its full sequence is MSAKQPNRKPAGKRKESDASAQEGRERKRAAKRKGLKAGSRQQVEQAGKKSGTKQAKDPRIGSRKPVALIVEEKSSKPVAPKQIKEKKLVMTPEQELASIENDDRLNDLLDRLDAGETLEATEQAWVDQRVDRYQELMDELGIIDTDDDEDEADFDEADFDEPGQPASEEELWDRFTQVDYQPEPKPEPKKK.

Positions 1–12 (MSAKQPNRKPAG) are enriched in basic residues. Disordered stretches follow at residues 1-87 (MSAK…IKEK) and 145-192 (DTDD…PKKK). A compositionally biased stretch (basic and acidic residues) spans 13–26 (KRKESDASAQEGRE). A compositionally biased stretch (basic residues) spans 27–36 (RKRAAKRKGL). Residues 145 to 172 (DTDDDEDEADFDEADFDEPGQPASEEEL) are compositionally biased toward acidic residues. Positions 183-192 (PEPKPEPKKK) are enriched in basic and acidic residues.

This sequence belongs to the YihI family. As to quaternary structure, interacts with Der.

Its function is as follows. A GTPase-activating protein (GAP) that modifies Der/EngA GTPase function. May play a role in ribosome biogenesis. The sequence is that of Der GTPase-activating protein YihI from Aeromonas hydrophila subsp. hydrophila (strain ATCC 7966 / DSM 30187 / BCRC 13018 / CCUG 14551 / JCM 1027 / KCTC 2358 / NCIMB 9240 / NCTC 8049).